A 175-amino-acid chain; its full sequence is Ribosome-binding factor A (175 aa).

The tract at residues 125 to 175 (TAKHAGEADPYKSDAPEDVDIDEDDFDEEDIDLAGDDDIDEDANKDADSSK) is disordered. Basic and acidic residues predominate over residues 128-139 (HAGEADPYKSDA). A compositionally biased stretch (acidic residues) spans 140-165 (PEDVDIDEDDFDEEDIDLAGDDDIDE). Basic and acidic residues predominate over residues 166–175 (DANKDADSSK).

It belongs to the RbfA family. As to quaternary structure, monomer. Binds 30S ribosomal subunits, but not 50S ribosomal subunits or 70S ribosomes.

The protein resides in the cytoplasm. One of several proteins that assist in the late maturation steps of the functional core of the 30S ribosomal subunit. Associates with free 30S ribosomal subunits (but not with 30S subunits that are part of 70S ribosomes or polysomes). Required for efficient processing of 16S rRNA. May interact with the 5'-terminal helix region of 16S rRNA. This is Ribosome-binding factor A from Pseudarthrobacter chlorophenolicus (strain ATCC 700700 / DSM 12829 / CIP 107037 / JCM 12360 / KCTC 9906 / NCIMB 13794 / A6) (Arthrobacter chlorophenolicus).